A 20-amino-acid chain; its full sequence is AEPLASQLKEPIAGGGWWAA.

Monomer. In terms of processing, glycosylated. As to expression, stored in epidermis and secreted into the hemolymph and cuticle. Not detected in the interior of the epidermis, fat body cells or columnar or goblet cells of the midgut epithelium (at protein level).

Functionally, inhibits trypsin and chymotrypsin. This Antheraea mylitta (Tasar silkworm) protein is Protease inhibitor.